The primary structure comprises 443 residues: Histidinol dehydrogenase (443 aa).

NAD(+)-binding residues include tyrosine 141, glutamine 203, and asparagine 226. The substrate site is built by serine 249, glutamine 271, and histidine 274. 2 residues coordinate Zn(2+): glutamine 271 and histidine 274. Active-site proton acceptor residues include glutamate 339 and histidine 340. 4 residues coordinate substrate: histidine 340, aspartate 373, glutamate 427, and histidine 432. Aspartate 373 contributes to the Zn(2+) binding site. Zn(2+) is bound at residue histidine 432.

Belongs to the histidinol dehydrogenase family. The cofactor is Zn(2+).

It carries out the reaction L-histidinol + 2 NAD(+) + H2O = L-histidine + 2 NADH + 3 H(+). Its pathway is amino-acid biosynthesis; L-histidine biosynthesis; L-histidine from 5-phospho-alpha-D-ribose 1-diphosphate: step 9/9. Functionally, catalyzes the sequential NAD-dependent oxidations of L-histidinol to L-histidinaldehyde and then to L-histidine. This chain is Histidinol dehydrogenase, found in Chlorobium luteolum (strain DSM 273 / BCRC 81028 / 2530) (Pelodictyon luteolum).